The primary structure comprises 88 residues: Cell division topological specificity factor (88 aa).

It belongs to the MinE family.

Its function is as follows. Prevents the cell division inhibition by proteins MinC and MinD at internal division sites while permitting inhibition at polar sites. This ensures cell division at the proper site by restricting the formation of a division septum at the midpoint of the long axis of the cell. In Acidovorax ebreus (strain TPSY) (Diaphorobacter sp. (strain TPSY)), this protein is Cell division topological specificity factor.